The chain runs to 709 residues: Early transcription factor 82 kDa subunit (709 aa).

The protein belongs to the poxviridae VETF large subunit family. In terms of assembly, heterodimer of a 70 kDa and a 82 kDa subunit. Part of the early transcription complex composed of ETF, RAP94, and the DNA-directed RNA polymerase.

Its subcellular location is the virion. Acts with RNA polymerase to initiate transcription from early gene promoters. Is recruited by the RPO-associated protein of 94 kDa (RAP94) to form the early transcription complex, which also contains the core RNA polymerase. ETF heterodimer binds to early gene promoters. In Vertebrata (FPV), this protein is Early transcription factor 82 kDa subunit (VETFL).